A 494-amino-acid chain; its full sequence is Ubiquitin carboxyl-terminal hydrolase 27 (494 aa).

Residues 30–50 (LSFAGLLGVAGFVFAQQHGLF) form a helical membrane-spanning segment. The USP domain occupies 74 to 494 (PGLQNLGNNC…EASLLFYERL (421 aa)). Catalysis depends on C83, which acts as the Nucleophile. The Proton acceptor role is filled by H440.

The protein belongs to the peptidase C19 family.

Its subcellular location is the membrane. It catalyses the reaction Thiol-dependent hydrolysis of ester, thioester, amide, peptide and isopeptide bonds formed by the C-terminal Gly of ubiquitin (a 76-residue protein attached to proteins as an intracellular targeting signal).. Functionally, recognizes and hydrolyzes the peptide bond at the C-terminal Gly of ubiquitin. Involved in the processing of poly-ubiquitin precursors as well as that of ubiquitinated proteins. The polypeptide is Ubiquitin carboxyl-terminal hydrolase 27 (UBP27) (Arabidopsis thaliana (Mouse-ear cress)).